Reading from the N-terminus, the 594-residue chain is APOBEC1 complementation factor (594 aa).

RRM domains are found at residues 56-134 (CEIF…ASVD), 136-218 (CRLF…WAEP), and 231-303 (KILY…LAKP). Positions 359–408 (HFPATKGHLSNRALIRTPSVREIYMNVPVGAAGVRGLGGRGYLAYTGLGR) are required for nuclear localization. Residue threonine 498 is modified to Phosphothreonine.

As to quaternary structure, part of the apolipoprotein B mRNA editing complex with APOBEC1. Interacts with TNPO2; TNPO2 may be responsible for transport of A1CF into the nucleus. Interacts with SYNCRIP. Interacts with CELF2/CUGBP2. Interacts with RBM47. As to expression, isoforms 1 and 2 are widely expressed while isoforms 3 and 4 are restricted to liver and small intestine.

It localises to the nucleus. The protein localises to the endoplasmic reticulum. The protein resides in the cytoplasm. In terms of biological role, essential component of the apolipoprotein B mRNA editing enzyme complex which is responsible for the postranscriptional editing of a CAA codon for Gln to a UAA codon for stop in APOB mRNA. Binds to APOB mRNA and is probably responsible for docking the catalytic subunit, APOBEC1, to the mRNA to allow it to deaminate its target cytosine. The complex also seems to protect the edited APOB mRNA from nonsense-mediated decay. The protein is APOBEC1 complementation factor (A1cf) of Rattus norvegicus (Rat).